We begin with the raw amino-acid sequence, 376 residues long: Glucose-1-phosphate adenylyltransferase (376 aa).

Alpha-D-glucose 1-phosphate-binding positions include Tyr101, Gly166, Glu181–Lys182, and Ser192.

This sequence belongs to the bacterial/plant glucose-1-phosphate adenylyltransferase family. As to quaternary structure, homotetramer.

The enzyme catalyses alpha-D-glucose 1-phosphate + ATP + H(+) = ADP-alpha-D-glucose + diphosphate. Its pathway is glycan biosynthesis; glycogen biosynthesis. Functionally, involved in the biosynthesis of ADP-glucose, a building block required for the elongation reactions to produce glycogen. Catalyzes the reaction between ATP and alpha-D-glucose 1-phosphate (G1P) to produce pyrophosphate and ADP-Glc. This Bacillus cereus (strain Q1) protein is Glucose-1-phosphate adenylyltransferase.